A 189-amino-acid chain; its full sequence is Class A basic helix-loop-helix protein 15 (189 aa).

Residues 1–12 show a composition bias toward basic residues; the sequence is MKTKNRPPRRRA. Disordered regions lie at residues 1–85 and 167–189; these read MKTK…ERER and TEAQPQGHLQRYSTQIHSFREGT. At Thr25 the chain carries Phosphothreonine. Over residues 68 to 85 the composition is skewed to basic and acidic residues; it reads GRRDSSIQRRLESNERER. Residues 75–127 form the bHLH domain; it reads QRRLESNERERQRMHKLNNAFQALREVIPHVRADKKLSKIETLTLAKNYIKSL.

In terms of assembly, forms homodimers or heterodimers with TCF3 gene products E12 and E47. These dimers bind to the E-box site, however, heterodimer with MYOD1 does not bind target DNA. As to expression, expressed in brain, liver, spleen and skeletal muscle.

The protein resides in the nucleus. Its function is as follows. Plays a role in controlling the transcriptional activity of MYOD1, ensuring that expanding myoblast populations remain undifferentiated. Repression may occur through muscle-specific E-box occupancy by homodimers. May also negatively regulate bHLH-mediated transcription through an N-terminal repressor domain. Serves as a key regulator of acinar cell function, stability, and identity. Also required for normal organelle localization in exocrine cells and for mitochondrial calcium ion transport. May function as a unique regulator of gene expression in several different embryonic and postnatal cell lineages. Binds to the E-box consensus sequence 5'-CANNTG-3'. The polypeptide is Class A basic helix-loop-helix protein 15 (BHLHA15) (Homo sapiens (Human)).